A 319-amino-acid polypeptide reads, in one-letter code: Lipase 1 (319 aa).

Ser189 functions as the Nucleophile in the catalytic mechanism. The Ca(2+) site is built by Asp314 and Asp317.

The catalysed reaction is a triacylglycerol + H2O = a diacylglycerol + a fatty acid + H(+). The protein is Lipase 1 (lip1) of Moraxella sp. (strain TA144).